Here is a 467-residue protein sequence, read N- to C-terminus: MSNDNQLDKKSQAWSALFSEPMSELVKRYTASVDFDQRLWRADIDGSLAHAEMLAAQGILTAEDHAAIVRGMAQVVAEIESGAFEWKLDLEDVHLNIEARLTQLVGDAGKRLHTGRSRNDQVATDVRLWLRGEIDAIGALLSALQRALVDVAEPNAEVILPGFTHLQVAQPVSFGHHLLAYVEMFARDAERLLDVRRRVNRLPLGAAALAGTSYPLDRERVARTLGFDGVCQNSLDAVSDRDFAIEFTAAASLCMVHVSRLSEELILWMSQSFGFIDLADRFCTGSSIMPQKKNPDVPELARGKTGRVVGHLMALITLMKGQPLAYNKDNQEDKEPLFDTVDTLKDTLRIFAELVGGISVKPEAMERAALKGYATATDLADYLVKKGLPFRDAHEVVAHAVKTAIAQGRDLSELPLPALQAFHPAITDDVHAALTLRGSLDARQVLGGTAPAQVRFQIARHRTRLGS.

This sequence belongs to the lyase 1 family. Argininosuccinate lyase subfamily.

Its subcellular location is the cytoplasm. It carries out the reaction 2-(N(omega)-L-arginino)succinate = fumarate + L-arginine. The protein operates within amino-acid biosynthesis; L-arginine biosynthesis; L-arginine from L-ornithine and carbamoyl phosphate: step 3/3. In Methylibium petroleiphilum (strain ATCC BAA-1232 / LMG 22953 / PM1), this protein is Argininosuccinate lyase.